Consider the following 318-residue polypeptide: Quinolinate synthase (318 aa).

Iminosuccinate-binding residues include His-34 and Ser-51. Cys-96 is a binding site for [4Fe-4S] cluster. Iminosuccinate-binding positions include 122–124 and Ser-139; that span reads YIN. Cys-182 serves as a coordination point for [4Fe-4S] cluster. Iminosuccinate-binding positions include 208 to 210 and Thr-225; that span reads HPE. Residue Cys-275 participates in [4Fe-4S] cluster binding.

It belongs to the quinolinate synthase family. Type 2 subfamily. It depends on [4Fe-4S] cluster as a cofactor.

Its subcellular location is the cytoplasm. It catalyses the reaction iminosuccinate + dihydroxyacetone phosphate = quinolinate + phosphate + 2 H2O + H(+). It functions in the pathway cofactor biosynthesis; NAD(+) biosynthesis; quinolinate from iminoaspartate: step 1/1. In terms of biological role, catalyzes the condensation of iminoaspartate with dihydroxyacetone phosphate to form quinolinate. This chain is Quinolinate synthase, found in Synechocystis sp. (strain ATCC 27184 / PCC 6803 / Kazusa).